A 265-amino-acid polypeptide reads, in one-letter code: Zinc transporter ZupT (265 aa).

Transmembrane regions (helical) follow at residues 6–26 (IAFA…GGAL), 37–57 (FMAA…FMEI), 77–97 (WTMM…DRLV), 122–142 (GMFT…ATFL), 150–170 (IAIP…IAVA), 184–204 (FWWA…GFAL), 208–228 (FIGP…MVFI), and 245–265 (CAIY…ALFI). 2 residues coordinate Fe(2+): Asn133 and Glu136. Residues Glu136 and His161 each contribute to the Zn(2+) site. Positions 162, 165, and 194 each coordinate Fe(2+). Glu165 is a binding site for Zn(2+).

It belongs to the ZIP transporter (TC 2.A.5) family. ZupT subfamily.

It localises to the cell membrane. It catalyses the reaction Zn(2+)(in) = Zn(2+)(out). Functionally, mediates zinc uptake. May also transport other divalent cations. This is Zinc transporter ZupT from Corynebacterium aurimucosum (strain ATCC 700975 / DSM 44827 / CIP 107346 / CN-1) (Corynebacterium nigricans).